Consider the following 341-residue polypeptide: UDP-3-O-(3-hydroxymyristoyl)glucosamine N-acyltransferase (341 aa).

The active-site Proton acceptor is His-239.

This sequence belongs to the transferase hexapeptide repeat family. LpxD subfamily. As to quaternary structure, homotrimer.

It catalyses the reaction a UDP-3-O-[(3R)-3-hydroxyacyl]-alpha-D-glucosamine + a (3R)-hydroxyacyl-[ACP] = a UDP-2-N,3-O-bis[(3R)-3-hydroxyacyl]-alpha-D-glucosamine + holo-[ACP] + H(+). The catalysed reaction is UDP-3-O-[(3R)-3-hydroxytetradecanoyl]-alpha-D-glucosamine + (3R)-hydroxytetradecanoyl-[ACP] = UDP-2-N,3-O-bis[(3R)-3-hydroxytetradecanoyl]-alpha-D-glucosamine + holo-[ACP] + H(+). It functions in the pathway glycolipid biosynthesis; lipid IV(A) biosynthesis; lipid IV(A) from (3R)-3-hydroxytetradecanoyl-[acyl-carrier-protein] and UDP-N-acetyl-alpha-D-glucosamine: step 3/6. Its function is as follows. Catalyzes the N-acylation of UDP-3-O-(hydroxytetradecanoyl)glucosamine using 3-hydroxytetradecanoyl-ACP as the acyl donor. Is involved in the biosynthesis of lipid A, a phosphorylated glycolipid that anchors the lipopolysaccharide to the outer membrane of the cell. The chain is UDP-3-O-(3-hydroxymyristoyl)glucosamine N-acyltransferase from Escherichia coli (strain UTI89 / UPEC).